We begin with the raw amino-acid sequence, 181 residues long: MLLVGRIGKSVGLNGGLKLHLESDFPECLKKGVKVSVAPINAFSCASSFKDYVIHSYEHAKNLLFLETIRTPEKAKELTNLGLFMSEAESKKLCVLKEGEFFYCDLIGLSVVEGNEILGKVIEIQRISQTDYFMVETTRSLVEKGLAKIFLIPYRDFYIQEILLQDKKITTHNAKTLLENS.

One can recognise a PRC barrel domain in the interval 98 to 177 (EGEFFYCDLI…KITTHNAKTL (80 aa)).

Belongs to the RimM family. Binds ribosomal protein uS19.

It localises to the cytoplasm. Functionally, an accessory protein needed during the final step in the assembly of 30S ribosomal subunit, possibly for assembly of the head region. Essential for efficient processing of 16S rRNA. May be needed both before and after RbfA during the maturation of 16S rRNA. It has affinity for free ribosomal 30S subunits but not for 70S ribosomes. The sequence is that of Ribosome maturation factor RimM from Helicobacter pylori (strain J99 / ATCC 700824) (Campylobacter pylori J99).